Reading from the N-terminus, the 225-residue chain is Cbp/p300-interacting transactivator 2 (225 aa).

This sequence belongs to the CITED family.

Its subcellular location is the nucleus. Functionally, transcriptional coactivator or corepressor of the p300/CBP-mediated transcription complex. May be involved in sex determination, early gonad development, left-right patterning during embryogenesis and differentiation of the adrenal cortex. This Xenopus tropicalis (Western clawed frog) protein is Cbp/p300-interacting transactivator 2 (cited2).